Here is a 251-residue protein sequence, read N- to C-terminus: Malonyl-[acyl-carrier protein] O-methyltransferase (251 aa).

This sequence belongs to the methyltransferase superfamily.

The enzyme catalyses malonyl-[ACP] + S-adenosyl-L-methionine = malonyl-[ACP] methyl ester + S-adenosyl-L-homocysteine. Its pathway is cofactor biosynthesis; biotin biosynthesis. Functionally, converts the free carboxyl group of a malonyl-thioester to its methyl ester by transfer of a methyl group from S-adenosyl-L-methionine (SAM). It allows to synthesize pimeloyl-ACP via the fatty acid synthetic pathway. The protein is Malonyl-[acyl-carrier protein] O-methyltransferase of Enterobacter lignolyticus (strain SCF1).